Here is a 406-residue protein sequence, read N- to C-terminus: Histidine--tRNA ligase (406 aa).

The protein belongs to the class-II aminoacyl-tRNA synthetase family. Homodimer.

The protein resides in the cytoplasm. It catalyses the reaction tRNA(His) + L-histidine + ATP = L-histidyl-tRNA(His) + AMP + diphosphate + H(+). This chain is Histidine--tRNA ligase, found in Nitratiruptor sp. (strain SB155-2).